Consider the following 138-residue polypeptide: ATP synthase epsilon chain (138 aa).

The protein belongs to the ATPase epsilon chain family. In terms of assembly, F-type ATPases have 2 components, CF(1) - the catalytic core - and CF(0) - the membrane proton channel. CF(1) has five subunits: alpha(3), beta(3), gamma(1), delta(1), epsilon(1). CF(0) has three main subunits: a, b and c.

The protein resides in the cell inner membrane. Functionally, produces ATP from ADP in the presence of a proton gradient across the membrane. The chain is ATP synthase epsilon chain from Blochmanniella floridana.